Consider the following 569-residue polypeptide: Proline--tRNA ligase (569 aa).

The protein belongs to the class-II aminoacyl-tRNA synthetase family. ProS type 1 subfamily. Homodimer.

It localises to the cytoplasm. It catalyses the reaction tRNA(Pro) + L-proline + ATP = L-prolyl-tRNA(Pro) + AMP + diphosphate. In terms of biological role, catalyzes the attachment of proline to tRNA(Pro) in a two-step reaction: proline is first activated by ATP to form Pro-AMP and then transferred to the acceptor end of tRNA(Pro). As ProRS can inadvertently accommodate and process non-cognate amino acids such as alanine and cysteine, to avoid such errors it has two additional distinct editing activities against alanine. One activity is designated as 'pretransfer' editing and involves the tRNA(Pro)-independent hydrolysis of activated Ala-AMP. The other activity is designated 'posttransfer' editing and involves deacylation of mischarged Ala-tRNA(Pro). The misacylated Cys-tRNA(Pro) is not edited by ProRS. The chain is Proline--tRNA ligase from Latilactobacillus sakei subsp. sakei (strain 23K) (Lactobacillus sakei subsp. sakei).